The following is a 273-amino-acid chain: Dermonecrotic toxin LspaSicTox-alphaIA1iii (273 aa).

H5 is an active-site residue. Mg(2+)-binding residues include E25 and D27. H41 functions as the Nucleophile in the catalytic mechanism. 2 cysteine pairs are disulfide-bonded: C45-C51 and C47-C190. D85 contacts Mg(2+).

It belongs to the arthropod phospholipase D family. Class II subfamily. The cofactor is Mg(2+). In terms of tissue distribution, expressed by the venom gland.

It is found in the secreted. It catalyses the reaction an N-(acyl)-sphingosylphosphocholine = an N-(acyl)-sphingosyl-1,3-cyclic phosphate + choline. The catalysed reaction is an N-(acyl)-sphingosylphosphoethanolamine = an N-(acyl)-sphingosyl-1,3-cyclic phosphate + ethanolamine. The enzyme catalyses a 1-acyl-sn-glycero-3-phosphocholine = a 1-acyl-sn-glycero-2,3-cyclic phosphate + choline. It carries out the reaction a 1-acyl-sn-glycero-3-phosphoethanolamine = a 1-acyl-sn-glycero-2,3-cyclic phosphate + ethanolamine. Dermonecrotic toxins cleave the phosphodiester linkage between the phosphate and headgroup of certain phospholipids (sphingolipid and lysolipid substrates), forming an alcohol (often choline) and a cyclic phosphate. This toxin acts on sphingomyelin (SM). It may also act on ceramide phosphoethanolamine (CPE), lysophosphatidylcholine (LPC) and lysophosphatidylethanolamine (LPE), but not on lysophosphatidylserine (LPS), and lysophosphatidylglycerol (LPG). It acts by transphosphatidylation, releasing exclusively cyclic phosphate products as second products. Induces dermonecrosis, hemolysis, increased vascular permeability, edema, inflammatory response, and platelet aggregation. This Loxosceles spadicea (Recluse spider) protein is Dermonecrotic toxin LspaSicTox-alphaIA1iii.